The chain runs to 139 residues: Nucleoside diphosphate kinase (139 aa).

The ATP site is built by Lys11, Phe59, Arg87, Thr93, Arg104, and Asn114. His117 serves as the catalytic Pros-phosphohistidine intermediate.

It belongs to the NDK family. In terms of assembly, homotetramer. Mg(2+) serves as cofactor.

It localises to the cytoplasm. It catalyses the reaction a 2'-deoxyribonucleoside 5'-diphosphate + ATP = a 2'-deoxyribonucleoside 5'-triphosphate + ADP. The catalysed reaction is a ribonucleoside 5'-diphosphate + ATP = a ribonucleoside 5'-triphosphate + ADP. Its function is as follows. Major role in the synthesis of nucleoside triphosphates other than ATP. The ATP gamma phosphate is transferred to the NDP beta phosphate via a ping-pong mechanism, using a phosphorylated active-site intermediate. The chain is Nucleoside diphosphate kinase from Flavobacterium johnsoniae (strain ATCC 17061 / DSM 2064 / JCM 8514 / BCRC 14874 / CCUG 350202 / NBRC 14942 / NCIMB 11054 / UW101) (Cytophaga johnsonae).